The chain runs to 227 residues: Phosphoribosylformylglycinamidine synthase subunit PurQ (227 aa).

A Glutamine amidotransferase type-1 domain is found at 3–225; that stretch reads FAVIVFPGSN…LKQWRETYVV (223 aa). Residue C86 is the Nucleophile of the active site. Active-site residues include H194 and E196.

In terms of assembly, part of the FGAM synthase complex composed of 1 PurL, 1 PurQ and 2 PurS subunits.

It is found in the cytoplasm. It carries out the reaction N(2)-formyl-N(1)-(5-phospho-beta-D-ribosyl)glycinamide + L-glutamine + ATP + H2O = 2-formamido-N(1)-(5-O-phospho-beta-D-ribosyl)acetamidine + L-glutamate + ADP + phosphate + H(+). The enzyme catalyses L-glutamine + H2O = L-glutamate + NH4(+). The protein operates within purine metabolism; IMP biosynthesis via de novo pathway; 5-amino-1-(5-phospho-D-ribosyl)imidazole from N(2)-formyl-N(1)-(5-phospho-D-ribosyl)glycinamide: step 1/2. Part of the phosphoribosylformylglycinamidine synthase complex involved in the purines biosynthetic pathway. Catalyzes the ATP-dependent conversion of formylglycinamide ribonucleotide (FGAR) and glutamine to yield formylglycinamidine ribonucleotide (FGAM) and glutamate. The FGAM synthase complex is composed of three subunits. PurQ produces an ammonia molecule by converting glutamine to glutamate. PurL transfers the ammonia molecule to FGAR to form FGAM in an ATP-dependent manner. PurS interacts with PurQ and PurL and is thought to assist in the transfer of the ammonia molecule from PurQ to PurL. The chain is Phosphoribosylformylglycinamidine synthase subunit PurQ from Bacillus anthracis (strain A0248).